A 147-amino-acid polypeptide reads, in one-letter code: Hemoglobin subunit beta (147 aa).

Position 2 is an N-acetylvaline (V2). The 145-residue stretch at H3–H147 folds into the Globin domain. At T13 the chain carries Phosphothreonine. At S45 the chain carries Phosphoserine. Position 60 is an N6-acetyllysine (K60). H64 is a binding site for heme b. K83 carries the N6-acetyllysine modification. H93 provides a ligand contact to heme b. C94 carries the post-translational modification S-nitrosocysteine. Position 145 is an N6-acetyllysine (K145).

The protein belongs to the globin family. In terms of assembly, heterotetramer of two alpha chains and two beta chains. Red blood cells.

In terms of biological role, involved in oxygen transport from the lung to the various peripheral tissues. This chain is Hemoglobin subunit beta (HBB), found in Lagothrix lagotricha (Brown woolly monkey).